The primary structure comprises 886 residues: DNA mismatch repair protein MutS (886 aa).

ATP is bound at residue 641–648 (GPNMAGKS).

The protein belongs to the DNA mismatch repair MutS family.

In terms of biological role, this protein is involved in the repair of mismatches in DNA. It is possible that it carries out the mismatch recognition step. This protein has a weak ATPase activity. The chain is DNA mismatch repair protein MutS from Rickettsia rickettsii (strain Sheila Smith).